Consider the following 468-residue polypeptide: Peripherin (468 aa).

The span at 1 to 16 shows a compositional bias: low complexity; that stretch reads MSHHSSGLRSSISSTS. Positions 1-22 are disordered; that stretch reads MSHHSSGLRSSISSTSYRRTFG. The tract at residues 1–96 is head; it reads MSHHSSGLRS…FLATRSNEKQ (96 aa). Tyr17 bears the 3'-nitrotyrosine mark. A phosphoserine mark is found at Ser28, Ser50, and Ser59. Residues 94-404 enclose the IF rod domain; sequence EKQELQELND…KLLEGEESRI (311 aa). Residues 97–129 are coil 1A; sequence ELQELNDRFANFIEKVRFLEQQNAALRGELSQA. Residues 130–140 are linker 1; sequence RGQEPARADQL. Residues 141–236 are coil 1B; it reads CQQELRELRR…KLHEEELRDL (96 aa). Residues 237–259 are linker 2; it reads QVSVESQQVQQVEVEATVKPELT. The tract at residues 260 to 402 is coil 2; that stretch reads AALRDIRAQY…YRKLLEGEES (143 aa). Tyr376 is subject to 3'-nitrotyrosine. A tail region spans residues 403–468; sequence RISVPVHSFA…ELDKSSIHSY (66 aa). The disordered stretch occupies residues 445–468; the sequence is GEKVVTESQKEQHSELDKSSIHSY. Position 468 is a phosphotyrosine (Tyr468).

The protein belongs to the intermediate filament family. Forms homodimers (in vitro). Homopolymerizes into a filamentous network (in vitro). Forms heterodimers with NEFL, NEFM or NEFH (in vitro). Interacts with DST (via C-terminus). Interacts with RAB7A; the interaction is direct. Interacts with PRKCE (via phorbol-ester/DAG-type 2 domain). In terms of processing, phosphorylated; phosphorylation increases after nerve injury in regenerating neurons. As to expression, expressed in hypoglossal motor neurons (at protein level). Expressed in the small and large sensory neurons of the dorsal root ganglion (at protein level). Expressed in cutaneous and muscular sensory neurons.

The protein localises to the cytoplasm. It localises to the cytoskeleton. The protein resides in the cell projection. Its subcellular location is the axon. It is found in the perikaryon. Class-III neuronal intermediate filament protein. My form an independent structural network without the involvement of other neurofilaments or may cooperate with the neuronal intermediate filament proteins NEFL, NEFH, NEFM and INA to form a filamentous network. Assembly of the neuronal intermediate filaments may be regulated by RAB7A. Plays a role in the development of unmyelinated sensory neurons. May be involved in axon elongation and axon regeneration after injury. Inhibits neurite extension in type II spiral ganglion neurons in the cochlea. This Rattus norvegicus (Rat) protein is Peripherin (Prph).